A 137-amino-acid chain; its full sequence is Nucleoside diphosphate kinase (137 aa).

ATP-binding residues include Lys9, Phe57, Arg85, Thr91, Arg102, and Asn112. Catalysis depends on His115, which acts as the Pros-phosphohistidine intermediate.

This sequence belongs to the NDK family. Homotetramer. Mg(2+) is required as a cofactor.

It is found in the cytoplasm. It catalyses the reaction a 2'-deoxyribonucleoside 5'-diphosphate + ATP = a 2'-deoxyribonucleoside 5'-triphosphate + ADP. It carries out the reaction a ribonucleoside 5'-diphosphate + ATP = a ribonucleoside 5'-triphosphate + ADP. Functionally, major role in the synthesis of nucleoside triphosphates other than ATP. The ATP gamma phosphate is transferred to the NDP beta phosphate via a ping-pong mechanism, using a phosphorylated active-site intermediate. The polypeptide is Nucleoside diphosphate kinase (Leptospira biflexa serovar Patoc (strain Patoc 1 / ATCC 23582 / Paris)).